The sequence spans 690 residues: Protein arginine N-methyltransferase 7 (690 aa).

2 SAM-dependent MTase PRMT-type domains span residues 14–357 (QNSW…YSLW) and 366–690 (TKSV…QKKL).

This sequence belongs to the class I-like SAM-binding methyltransferase superfamily. Protein arginine N-methyltransferase family. PRMT7 subfamily. In terms of tissue distribution, expressed at low level in ovary.

In terms of biological role, essential arginine methyltransferase that can both catalyze the formation of omega-N monomethylarginine (MMA) and symmetrical dimethylarginine (sDMA). Specifically mediates the symmetrical dimethylation of arginine residues in the small nuclear ribonucleoproteins SmD1 and SmD3. The sequence is that of Protein arginine N-methyltransferase 7 (Art7) from Drosophila melanogaster (Fruit fly).